Consider the following 55-residue polypeptide: Large ribosomal subunit protein bL33 (55 aa).

The protein belongs to the bacterial ribosomal protein bL33 family.

The chain is Large ribosomal subunit protein bL33 from Buchnera aphidicola subsp. Schizaphis graminum (strain Sg).